A 1120-amino-acid polypeptide reads, in one-letter code: DNA-directed RNA polymerase subunit beta (1120 aa).

The protein belongs to the RNA polymerase beta chain family. In plastids the minimal PEP RNA polymerase catalytic core is composed of four subunits: alpha, beta, beta', and beta''. When a (nuclear-encoded) sigma factor is associated with the core the holoenzyme is formed, which can initiate transcription.

It localises to the plastid. It is found in the chloroplast. It carries out the reaction RNA(n) + a ribonucleoside 5'-triphosphate = RNA(n+1) + diphosphate. Functionally, DNA-dependent RNA polymerase catalyzes the transcription of DNA into RNA using the four ribonucleoside triphosphates as substrates. This chain is DNA-directed RNA polymerase subunit beta, found in Gracilaria tenuistipitata var. liui (Red alga).